Here is an 86-residue protein sequence, read N- to C-terminus: Large ribosomal subunit protein bL31B (86 aa).

It belongs to the bacterial ribosomal protein bL31 family. Type B subfamily. Part of the 50S ribosomal subunit.

This is Large ribosomal subunit protein bL31B from Streptococcus uberis (strain ATCC BAA-854 / 0140J).